The primary structure comprises 242 residues: 4-hydroxy-tetrahydrodipicolinate reductase (242 aa).

NAD(+) is bound by residues 79 to 81 and 103 to 106; these read ATT and SANM. The active-site Proton donor/acceptor is the H135. H136 is a (S)-2,3,4,5-tetrahydrodipicolinate binding site. Residue K139 is the Proton donor of the active site. (S)-2,3,4,5-tetrahydrodipicolinate is bound at residue 145 to 146; the sequence is GT.

Belongs to the DapB family.

Its subcellular location is the cytoplasm. It carries out the reaction (S)-2,3,4,5-tetrahydrodipicolinate + NAD(+) + H2O = (2S,4S)-4-hydroxy-2,3,4,5-tetrahydrodipicolinate + NADH + H(+). The catalysed reaction is (S)-2,3,4,5-tetrahydrodipicolinate + NADP(+) + H2O = (2S,4S)-4-hydroxy-2,3,4,5-tetrahydrodipicolinate + NADPH + H(+). It participates in amino-acid biosynthesis; L-lysine biosynthesis via DAP pathway; (S)-tetrahydrodipicolinate from L-aspartate: step 4/4. Its function is as follows. Catalyzes the conversion of 4-hydroxy-tetrahydrodipicolinate (HTPA) to tetrahydrodipicolinate. The sequence is that of 4-hydroxy-tetrahydrodipicolinate reductase from Staphylococcus carnosus (strain TM300).